Consider the following 168-residue polypeptide: Phosphopantetheine adenylyltransferase (168 aa).

Residue T13 participates in substrate binding. ATP is bound by residues 13–14 (TF) and H21. Substrate contacts are provided by K45, L78, and R92. Residues 93–95 (GLR), E103, and 128–134 (TQFISSG) each bind ATP.

It belongs to the bacterial CoaD family. In terms of assembly, homohexamer. Requires Mg(2+) as cofactor.

It localises to the cytoplasm. It catalyses the reaction (R)-4'-phosphopantetheine + ATP + H(+) = 3'-dephospho-CoA + diphosphate. Its pathway is cofactor biosynthesis; coenzyme A biosynthesis; CoA from (R)-pantothenate: step 4/5. Functionally, reversibly transfers an adenylyl group from ATP to 4'-phosphopantetheine, yielding dephospho-CoA (dPCoA) and pyrophosphate. This is Phosphopantetheine adenylyltransferase from Wolbachia sp. subsp. Drosophila simulans (strain wRi).